The chain runs to 244 residues: Cell division protein ZapD (244 aa).

It belongs to the ZapD family. As to quaternary structure, interacts with FtsZ.

The protein localises to the cytoplasm. Functionally, cell division factor that enhances FtsZ-ring assembly. Directly interacts with FtsZ and promotes bundling of FtsZ protofilaments, with a reduction in FtsZ GTPase activity. This chain is Cell division protein ZapD, found in Shewanella oneidensis (strain ATCC 700550 / JCM 31522 / CIP 106686 / LMG 19005 / NCIMB 14063 / MR-1).